A 322-amino-acid chain; its full sequence is Deoxyhypusine hydroxylase (322 aa).

Residues H78, E79, H111, and E112 each coordinate Fe cation. 4 HEAT-like PBS-type repeats span residues 109-135 (VRHE…CLKN), 203-229 (LRYR…GFND), 234-260 (FKHE…VLGR), and 267-293 (VRHE…YLND). Residues H236, E237, H269, and E270 each coordinate Fe cation.

This sequence belongs to the deoxyhypusine hydroxylase family. It depends on Fe(2+) as a cofactor.

It is found in the cytoplasm. The protein localises to the nucleus. It catalyses the reaction [eIF5A protein]-deoxyhypusine + AH2 + O2 = [eIF5A protein]-hypusine + A + H2O. Its pathway is protein modification; eIF5A hypusination. Its function is as follows. Catalyzes the hydroxylation of the N(6)-(4-aminobutyl)-L-lysine intermediate to form hypusine, an essential post-translational modification only found in mature eIF-5A factor. This Candida glabrata (strain ATCC 2001 / BCRC 20586 / JCM 3761 / NBRC 0622 / NRRL Y-65 / CBS 138) (Yeast) protein is Deoxyhypusine hydroxylase.